Here is a 149-residue protein sequence, read N- to C-terminus: 16.9 kDa class I heat shock protein 3 (149 aa).

The region spanning 35-149 (DTAAFANARV…PEVKAIEISG (115 aa)) is the sHSP domain.

It belongs to the small heat shock protein (HSP20) family. As to quaternary structure, may form oligomeric structures.

The protein localises to the cytoplasm. This is 16.9 kDa class I heat shock protein 3 (HSP16.9C) from Oryza sativa subsp. japonica (Rice).